The primary structure comprises 631 residues: Dolichyl-diphosphooligosaccharide--protein glycosyltransferase subunit 2 (631 aa).

The N-terminal stretch at 1-22 (MAPPGSSAVFLLALTITASTQA) is a signal peptide. Residues 23-540 (LTPTHYLTKH…REPEKRPPTV (518 aa)) are Lumenal-facing. An N-linked (GlcNAc...) asparagine glycan is attached at asparagine 106. Residue lysine 154 forms a Glycyl lysine isopeptide (Lys-Gly) (interchain with G-Cter in ubiquitin) linkage. A helical transmembrane segment spans residues 541–561 (VSNTFTALILSPLLLLFALWI). Topologically, residues 562 to 571 (RIGANVSNFT) are cytoplasmic. The chain crosses the membrane as a helical span at residues 572 to 592 (FAPSTVIFHLGHAAMLGLMYV). Topologically, residues 593 to 596 (YWTQ) are lumenal. A helical transmembrane segment spans residues 597–617 (LNMFQTLKYLAVLGTVTFLAG). At 618–631 (NRMLAQQAVKRTAH) the chain is on the cytoplasmic side.

The protein belongs to the SWP1 family. In terms of assembly, component of the oligosaccharyltransferase (OST) complex. OST exists in two different complex forms which contain common core subunits RPN1, RPN2, OST48, OST4, DAD1 and TMEM258, either STT3A or STT3B as catalytic subunits, and form-specific accessory subunits. STT3A complex assembly occurs through the formation of 3 subcomplexes. Subcomplex 1 contains RPN1 and TMEM258, subcomplex 2 contains the STT3A-specific subunits STT3A, DC2/OSTC, and KCP2 as well as the core subunit OST4, and subcomplex 3 contains RPN2, DAD1, and OST48. The STT3A complex can form stable complexes with the Sec61 complex or with both the Sec61 and TRAP complexes. Interacts with DDI2. Interacts with TMEM35A/NACHO.

It is found in the endoplasmic reticulum. It localises to the endoplasmic reticulum membrane. Its pathway is protein modification; protein glycosylation. Functionally, subunit of the oligosaccharyl transferase (OST) complex that catalyzes the initial transfer of a defined glycan (Glc(3)Man(9)GlcNAc(2) in eukaryotes) from the lipid carrier dolichol-pyrophosphate to an asparagine residue within an Asn-X-Ser/Thr consensus motif in nascent polypeptide chains, the first step in protein N-glycosylation. N-glycosylation occurs cotranslationally and the complex associates with the Sec61 complex at the channel-forming translocon complex that mediates protein translocation across the endoplasmic reticulum (ER). All subunits are required for a maximal enzyme activity. The sequence is that of Dolichyl-diphosphooligosaccharide--protein glycosyltransferase subunit 2 from Rattus norvegicus (Rat).